The sequence spans 382 residues: Mannitol-1-phosphate 5-dehydrogenase (382 aa).

Position 3–14 (3–14 (ALHFGAGNIGRG)) interacts with NAD(+). An N6-acetyllysine modification is found at Lys-269.

It belongs to the mannitol dehydrogenase family.

The enzyme catalyses D-mannitol 1-phosphate + NAD(+) = beta-D-fructose 6-phosphate + NADH + H(+). In Escherichia coli O7:K1 (strain IAI39 / ExPEC), this protein is Mannitol-1-phosphate 5-dehydrogenase.